The sequence spans 252 residues: DNA-directed RNA polymerase III subunit rpc8 (252 aa).

Positions 214 to 252 are disordered; sequence WTNQSAGDDDENEEDGGENQDDEVAEDDGGEEPTIEEDE. Acidic residues predominate over residues 220 to 252; it reads GDDDENEEDGGENQDDEVAEDDGGEEPTIEEDE.

It belongs to the eukaryotic RPB7/RPC8 RNA polymerase subunit family. As to quaternary structure, component of the RNA polymerase III (Pol III) complex consisting of several subunits.

It is found in the nucleus. DNA-dependent RNA polymerase catalyzes the transcription of DNA into RNA using the four ribonucleoside triphosphates as substrates. The chain is DNA-directed RNA polymerase III subunit rpc8 (polr3h-1) from Dictyostelium discoideum (Social amoeba).